A 393-amino-acid chain; its full sequence is MLVKSLQTCKICGAENTRGNHFGVQCCRACAVFFRRRAGTKYLRLKCLSVHCGEAARFCKPCRLKRCYEAGMKIEYFQHNRDSIKSSSIAQIPRSFANIVGRPSLVIFCVPQDSYQKTFVDLNSLVGKASEIFTAGPESPYIGLTQLKKLATFSNCSKEWAQTRFKTISHGEMSYFWEFYFLRTAKWLTYFDEFQRIPDEIKIKLLLSFWHVFARLDKLITTAKARKLKLCSQQTWAMSNGLILDFDRTKVDFSDISNYPTEDLFYFLNSITALDLQPQVLELMELEVSDMEFNFMLAQLTFSYAGKRFQGDILKICDRFQEVLSNDLHEYYVKEMRTPRYSGRLGKIMKINNAIQNDIWKNRPRGELAAIFNVFKVEFSHPEMFIDTGFVRN.

The segment at residues L6–H79 is a DNA-binding region (nuclear receptor). The NR C4-type zinc finger occupies C9–C30. The NR C4-type; degenerate zinc-finger motif lies at C47 to C62. An NR LBD domain is found at D121–T388.

Belongs to the nuclear hormone receptor family.

It localises to the nucleus. Its function is as follows. Orphan nuclear receptor. The sequence is that of Nuclear hormone receptor family member nhr-90 (nhr-90) from Caenorhabditis elegans.